The following is a 97-amino-acid chain: Co-chaperonin GroES (97 aa).

The protein belongs to the GroES chaperonin family. Heptamer of 7 subunits arranged in a ring. Interacts with the chaperonin GroEL.

The protein localises to the cytoplasm. Together with the chaperonin GroEL, plays an essential role in assisting protein folding. The GroEL-GroES system forms a nano-cage that allows encapsulation of the non-native substrate proteins and provides a physical environment optimized to promote and accelerate protein folding. GroES binds to the apical surface of the GroEL ring, thereby capping the opening of the GroEL channel. This is Co-chaperonin GroES from Pectobacterium carotovorum subsp. carotovorum (strain PC1).